Consider the following 295-residue polypeptide: Replication-associated protein A (295 aa).

Residues 1–31 (MSSLPVSESEGEGSGTSVQVPSRGGQVTPGE) are disordered. In terms of domain architecture, CRESS-DNA virus Rep endonuclease spans 35–138 (SLRTKHVFLT…PESSWEFGKF (104 aa)). Residues 42–45 (FLTY) carry the RCR-1 motif. Residues glutamate 76, histidine 84, and histidine 86 each contribute to the a divalent metal cation site. An RCR-2 motif is present at residues 84-86 (HLH). The active-site For DNA cleavage activity is tyrosine 124. Positions 124-127 (YCMK) match the RCR-3 motif. The segment at 192 to 204 (SANALFPDPPQTY) is oligomerization.

The protein belongs to the geminiviridae Rep protein family. Homooligomer. Part of the C- and V-complexes which are RepA-Rep-DNA complexes involved in the c-sense and v-sense transcription.

It is found in the host nucleus. It localises to the host cytoplasm. Its function is as follows. Implicated in enhancement of V-sense gene expression. Acts a an inhibitor of C-sense gene transcription. This Avena sativa (Oat) protein is Replication-associated protein A.